Consider the following 673-residue polypeptide: Methionine--tRNA ligase (673 aa).

The 'HIGH' region signature appears at 13–23 (PYTNGFCHLGH). C144, C147, C156, and C160 together coordinate Zn(2+). Positions 325-329 (KFSKS) match the 'KMSKS' region motif. ATP is bound at residue K328. In terms of domain architecture, tRNA-binding spans 575–673 (DVAKLDLRVG…KDVPEGTKVH (99 aa)).

The protein belongs to the class-I aminoacyl-tRNA synthetase family. MetG type 1 subfamily. In terms of assembly, homodimer. The cofactor is Zn(2+).

The protein resides in the cytoplasm. The catalysed reaction is tRNA(Met) + L-methionine + ATP = L-methionyl-tRNA(Met) + AMP + diphosphate. Is required not only for elongation of protein synthesis but also for the initiation of all mRNA translation through initiator tRNA(fMet) aminoacylation. In Methanocorpusculum labreanum (strain ATCC 43576 / DSM 4855 / Z), this protein is Methionine--tRNA ligase.